The primary structure comprises 317 residues: MAETEAGLEVEEPTEDDTLPSDTVSLSDSDSDLSLPSGVEVQALSPERLSGESQEDSGPDDPPSHPTGIPTTAVQPFHLRGMSSTFSQRSHSIFDCLESAARQEPCSAPQTSVVDNCSFKRPVAPPSQTPARSLSRVHGNTDPTRVHPVPDYVSHPERWTKYSLEDVSETSEQSNRDAALAFLSSRSQASPTDYVPFFNQDPSSCGEGRVVFTKPVRGSEARAERKRVLKKGVVSGAGGEASVELAHLAGPEAEEWSGHQGQPEVVVPSEAARPESSSGPIGMKTVGFHGSKKRSRDHFRNRDSNPEGPGSERGPSV.

The segment covering 1–19 (MAETEAGLEVEEPTEDDTL) has biased composition (acidic residues). The tract at residues 1 to 78 (MAETEAGLEV…IPTTAVQPFH (78 aa)) is disordered. Low complexity predominate over residues 20–37 (PSDTVSLSDSDSDLSLPS). Residues Ser57, Ser64, Ser83, and Ser92 each carry the phosphoserine modification. Residues 74–101 (VQPFHLRGMSSTFSQRSHSIFDCLESAA) form a hom2; mediates interaction with the U5 snRNP complexes and required for spliceosomal tri-snRNP complex assembly region. The segment at 123–151 (VAPPSQTPARSLSRVHGNTDPTRVHPVPD) is disordered. The interaction with SNRNP200 stretch occupies residues 146-300 (VHPVPDYVSH…SKKRSRDHFR (155 aa)). The hom3; mediates interaction with the U5 snRNP complexes stretch occupies residues 147-183 (HPVPDYVSHPERWTKYSLEDVSETSEQSNRDAALAFL). The interval 198–238 (FNQDPSSCGEGRVVFTKPVRGSEARAERKRVLKKGVVSGAG) is hom4; necessary for interaction with the PRPF19 complex and required for spliceosomal tri-snRNP complex assembly. Lys214 bears the N6-acetyllysine mark. Residues 247–317 (HLAGPEAEEW…GPGSERGPSV (71 aa)) form a disordered region.

This sequence belongs to the TSSC4 family. As to quaternary structure, interacts in a RNA-independent manner with distinct U5 snRNP-containing complexes, the mono-U5 snRNP and the post-splicing U5 snRNP-PRPF19 complex. Interacts with SNRNP200; the interaction is direct, excludes recruitment of C9ORF78 and WBP4 to SNRNP200 and negatively regulates its RNA helicase activity. Interacts with PRPF8; the interaction is direct.

Its subcellular location is the nucleus. The protein localises to the cytoplasm. In terms of biological role, protein associated with the U5 snRNP, during its maturation and its post-splicing recycling and which is required for spliceosomal tri-snRNP complex assembly in the nucleus. Has a molecular sequestering activity and transiently hinders SNRNP200 binding sites for constitutive splicing factors that intervene later during the assembly of the spliceosome and splicing. Together with its molecular sequestering activity, may also function as a molecular adapter and placeholder, coordinating the assembly of the U5 snRNP and its association with the U4/U6 di-snRNP. In Rattus norvegicus (Rat), this protein is U5 small nuclear ribonucleoprotein TSSC4.